Here is a 220-residue protein sequence, read N- to C-terminus: Protein-L-isoaspartate O-methyltransferase (220 aa).

Residue Ser64 is part of the active site.

The protein belongs to the methyltransferase superfamily. L-isoaspartyl/D-aspartyl protein methyltransferase family.

Its subcellular location is the cytoplasm. The catalysed reaction is [protein]-L-isoaspartate + S-adenosyl-L-methionine = [protein]-L-isoaspartate alpha-methyl ester + S-adenosyl-L-homocysteine. In terms of biological role, catalyzes the methyl esterification of L-isoaspartyl residues in peptides and proteins that result from spontaneous decomposition of normal L-aspartyl and L-asparaginyl residues. It plays a role in the repair and/or degradation of damaged proteins. This is Protein-L-isoaspartate O-methyltransferase from Methanoculleus marisnigri (strain ATCC 35101 / DSM 1498 / JR1).